Here is a 520-residue protein sequence, read N- to C-terminus: Transactivator/viroplasmin protein (520 aa).

Residues 487 to 520 form a disordered region; the sequence is QDASADSGPKDGPPPTRSIVEKEDVPTTSSKQVD.

It belongs to the caulimoviridae viroplasmin family.

It localises to the host cytoplasm. Its function is as follows. Enhances the ribosomal termination-reinitiation event leading to the translation of major open reading frames on the polycistronic viral RNAs. This Cauliflower mosaic virus (strain CM-1841) (CaMV) protein is Transactivator/viroplasmin protein.